Consider the following 330-residue polypeptide: Aspartate--ammonia ligase (330 aa).

The protein belongs to the class-II aminoacyl-tRNA synthetase family. AsnA subfamily.

It localises to the cytoplasm. It catalyses the reaction L-aspartate + NH4(+) + ATP = L-asparagine + AMP + diphosphate + H(+). Its pathway is amino-acid biosynthesis; L-asparagine biosynthesis; L-asparagine from L-aspartate (ammonia route): step 1/1. The polypeptide is Aspartate--ammonia ligase (Streptococcus pyogenes serotype M3 (strain ATCC BAA-595 / MGAS315)).